Here is a 424-residue protein sequence, read N- to C-terminus: Enolase (424 aa).

Q162 serves as a coordination point for (2R)-2-phosphoglycerate. The Proton donor role is filled by E204. D241, E284, and D311 together coordinate Mg(2+). 4 residues coordinate (2R)-2-phosphoglycerate: K336, R365, S366, and K387. K336 acts as the Proton acceptor in catalysis.

This sequence belongs to the enolase family. The cofactor is Mg(2+).

The protein localises to the cytoplasm. The protein resides in the secreted. Its subcellular location is the cell surface. It catalyses the reaction (2R)-2-phosphoglycerate = phosphoenolpyruvate + H2O. Its pathway is carbohydrate degradation; glycolysis; pyruvate from D-glyceraldehyde 3-phosphate: step 4/5. Catalyzes the reversible conversion of 2-phosphoglycerate (2-PG) into phosphoenolpyruvate (PEP). It is essential for the degradation of carbohydrates via glycolysis. The sequence is that of Enolase from Rhizobium meliloti (strain 1021) (Ensifer meliloti).